We begin with the raw amino-acid sequence, 890 residues long: Translation initiation factor IF-2 (890 aa).

A disordered region spans residues 45 to 304 (LIDHLNQKNS…LQQGFQKPAQ (260 aa)). Over residues 67 to 81 (STLNIPGTGGKSKSV) the composition is skewed to polar residues. Residues 92–217 (VKRDPQEAER…RMAEENKWID (126 aa)) show a composition bias toward basic and acidic residues. Over residues 252 to 266 (GRGRNAKAARPKKGN) the composition is skewed to basic residues. Positions 267–280 (KHAESKADREEARA) are enriched in basic and acidic residues. The 170-residue stretch at 389–558 (PRAPVVTIMG…LLQAEVLELK (170 aa)) folds into the tr-type G domain. The interval 398-405 (GHVDHGKT) is G1. A GTP-binding site is contributed by 398 to 405 (GHVDHGKT). A G2 region spans residues 423–427 (GITQH). The interval 444–447 (DTPG) is G3. Residues 444–448 (DTPGH) and 498–501 (NKID) each bind GTP. The segment at 498–501 (NKID) is G4. A G5 region spans residues 534 to 536 (SAK). K808 is subject to N6-acetyllysine.

Belongs to the TRAFAC class translation factor GTPase superfamily. Classic translation factor GTPase family. IF-2 subfamily.

The protein localises to the cytoplasm. In terms of biological role, one of the essential components for the initiation of protein synthesis. Protects formylmethionyl-tRNA from spontaneous hydrolysis and promotes its binding to the 30S ribosomal subunits. Also involved in the hydrolysis of GTP during the formation of the 70S ribosomal complex. The polypeptide is Translation initiation factor IF-2 (Escherichia coli O81 (strain ED1a)).